Reading from the N-terminus, the 190-residue chain is Recombination protein RecR (190 aa).

The segment at 58 to 73 (CEQCGALSENELCEIC) adopts a C4-type zinc-finger fold. Residues 81 to 167 (NILCIVESPK…TFSKIAQGIP (87 aa)) form the Toprim domain.

Belongs to the RecR family.

Its function is as follows. May play a role in DNA repair. It seems to be involved in an RecBC-independent recombinational process of DNA repair. It may act with RecF and RecO. The polypeptide is Recombination protein RecR (Campylobacter jejuni subsp. doylei (strain ATCC BAA-1458 / RM4099 / 269.97)).